A 714-amino-acid chain; its full sequence is Epithelial splicing regulatory protein 1 (714 aa).

3 consecutive RRM domains span residues 225–302, 326–406, and 450–530; these read TVIR…KATG, IIVR…KSTA, and DCVR…ACSA.

The protein belongs to the ESRP family.

The protein resides in the nucleus. MRNA splicing factor that regulates the formation of epithelial cell-specific isoforms. Specifically regulates the expression of FGFR2-IIIb, an epithelial cell-specific isoform of fgfr2. Acts by directly binding specific sequences in mRNAs. Binds the GU-rich sequence motifs in the ISE/ISS-3, a cis-element regulatory region present in the mRNA of fgfr2. This chain is Epithelial splicing regulatory protein 1 (esrp1), found in Danio rerio (Zebrafish).